The following is an 85-amino-acid chain: UPF0386 protein Plav_1374 (85 aa).

The protein belongs to the UPF0386 family.

The sequence is that of UPF0386 protein Plav_1374 from Parvibaculum lavamentivorans (strain DS-1 / DSM 13023 / NCIMB 13966).